A 301-amino-acid chain; its full sequence is Tetrahydromethanopterin S-methyltransferase subunit E (301 aa).

5 consecutive transmembrane segments (helical) span residues 85–105, 130–150, 151–171, 232–252, and 258–278; these read VIFA…TYCI, HTPV…VVSY, IMVA…IWGI, PVTG…TAVF, and LTMG…LIIW.

Belongs to the MtrE family. As to quaternary structure, the complex is composed of 8 subunits; MtrA, MtrB, MtrC, MtrD, MtrE, MtrF, MtrG and MtrH.

Its subcellular location is the cell membrane. It carries out the reaction 5-methyl-5,6,7,8-tetrahydromethanopterin + coenzyme M + 2 Na(+)(in) = 5,6,7,8-tetrahydromethanopterin + methyl-coenzyme M + 2 Na(+)(out). Functionally, part of a complex that catalyzes the formation of methyl-coenzyme M and tetrahydromethanopterin from coenzyme M and methyl-tetrahydromethanopterin. This is an energy-conserving, sodium-ion translocating step. The chain is Tetrahydromethanopterin S-methyltransferase subunit E from Methanococcoides burtonii (strain DSM 6242 / NBRC 107633 / OCM 468 / ACE-M).